We begin with the raw amino-acid sequence, 176 residues long: ATP synthase subunit delta (176 aa).

It belongs to the ATPase delta chain family. In terms of assembly, F-type ATPases have 2 components, F(1) - the catalytic core - and F(0) - the membrane proton channel. F(1) has five subunits: alpha(3), beta(3), gamma(1), delta(1), epsilon(1). F(0) has three main subunits: a(1), b(2) and c(10-14). The alpha and beta chains form an alternating ring which encloses part of the gamma chain. F(1) is attached to F(0) by a central stalk formed by the gamma and epsilon chains, while a peripheral stalk is formed by the delta and b chains.

The protein localises to the cell inner membrane. Functionally, f(1)F(0) ATP synthase produces ATP from ADP in the presence of a proton or sodium gradient. F-type ATPases consist of two structural domains, F(1) containing the extramembraneous catalytic core and F(0) containing the membrane proton channel, linked together by a central stalk and a peripheral stalk. During catalysis, ATP synthesis in the catalytic domain of F(1) is coupled via a rotary mechanism of the central stalk subunits to proton translocation. This protein is part of the stalk that links CF(0) to CF(1). It either transmits conformational changes from CF(0) to CF(1) or is implicated in proton conduction. This Campylobacter hominis (strain ATCC BAA-381 / DSM 21671 / CCUG 45161 / LMG 19568 / NCTC 13146 / CH001A) protein is ATP synthase subunit delta.